The chain runs to 379 residues: Protein COS2 (379 aa).

At 1 to 72 (MKENELKNEK…WKLSNNCIYP (72 aa)) the chain is on the cytoplasmic side. A helical membrane pass occupies residues 73-93 (LIVSLLVLFLGPIFVLVICGL). Topologically, residues 94 to 254 (SRKRSLSKQL…FLCCIYVSRG (161 aa)) are extracellular. The helical transmembrane segment at 255–275 (MCLLLRTLYLGWILFMLVQGF) threads the bilayer. Over 276–379 (QNIRVLIMSM…QLSRSEVLLV (104 aa)) the chain is Cytoplasmic.

It belongs to the DUP/COS family.

It localises to the membrane. In Saccharomyces cerevisiae (strain ATCC 204508 / S288c) (Baker's yeast), this protein is Protein COS2 (COS2).